Here is a 222-residue protein sequence, read N- to C-terminus: Pleckstrin homology domain-containing family B member 2 (222 aa).

A PH domain is found at 2-109; it reads AFVKSGWLLR…WKFTLQDSRT (108 aa). An a 1,2-diacyl-sn-glycero-3-phospho-L-serine-binding site is contributed by lysine 20.

The protein resides in the recycling endosome membrane. Its function is as follows. Involved in retrograde transport of recycling endosomes. The polypeptide is Pleckstrin homology domain-containing family B member 2 (PLEKHB2) (Pongo abelii (Sumatran orangutan)).